Consider the following 210-residue polypeptide: Urease accessory protein UreG (210 aa).

14–21 (GPVGSGKT) provides a ligand contact to GTP.

This sequence belongs to the SIMIBI class G3E GTPase family. UreG subfamily. In terms of assembly, homodimer. UreD, UreF and UreG form a complex that acts as a GTP-hydrolysis-dependent molecular chaperone, activating the urease apoprotein by helping to assemble the nickel containing metallocenter of UreC. The UreE protein probably delivers the nickel.

It is found in the cytoplasm. Facilitates the functional incorporation of the urease nickel metallocenter. This process requires GTP hydrolysis, probably effectuated by UreG. The sequence is that of Urease accessory protein UreG from Rhodopseudomonas palustris (strain BisA53).